Here is a 144-residue protein sequence, read N- to C-terminus: D-aminoacyl-tRNA deacylase (144 aa).

Positions 137–138 (GP) match the Gly-cisPro motif, important for rejection of L-amino acids motif.

Belongs to the DTD family. In terms of assembly, homodimer.

Its subcellular location is the cytoplasm. The catalysed reaction is glycyl-tRNA(Ala) + H2O = tRNA(Ala) + glycine + H(+). The enzyme catalyses a D-aminoacyl-tRNA + H2O = a tRNA + a D-alpha-amino acid + H(+). In terms of biological role, an aminoacyl-tRNA editing enzyme that deacylates mischarged D-aminoacyl-tRNAs. Also deacylates mischarged glycyl-tRNA(Ala), protecting cells against glycine mischarging by AlaRS. Acts via tRNA-based rather than protein-based catalysis; rejects L-amino acids rather than detecting D-amino acids in the active site. By recycling D-aminoacyl-tRNA to D-amino acids and free tRNA molecules, this enzyme counteracts the toxicity associated with the formation of D-aminoacyl-tRNA entities in vivo and helps enforce protein L-homochirality. This Acinetobacter baumannii (strain SDF) protein is D-aminoacyl-tRNA deacylase.